The chain runs to 404 residues: Phosphopentomutase (404 aa).

Mn(2+)-binding residues include aspartate 10, aspartate 297, histidine 302, aspartate 338, histidine 339, and histidine 350.

It belongs to the phosphopentomutase family. The cofactor is Mn(2+).

Its subcellular location is the cytoplasm. The catalysed reaction is 2-deoxy-alpha-D-ribose 1-phosphate = 2-deoxy-D-ribose 5-phosphate. It carries out the reaction alpha-D-ribose 1-phosphate = D-ribose 5-phosphate. It participates in carbohydrate degradation; 2-deoxy-D-ribose 1-phosphate degradation; D-glyceraldehyde 3-phosphate and acetaldehyde from 2-deoxy-alpha-D-ribose 1-phosphate: step 1/2. Its function is as follows. Isomerase that catalyzes the conversion of deoxy-ribose 1-phosphate (dRib-1-P) and ribose 1-phosphate (Rib-1-P) to deoxy-ribose 5-phosphate (dRib-5-P) and ribose 5-phosphate (Rib-5-P), respectively. This chain is Phosphopentomutase, found in Colwellia psychrerythraea (strain 34H / ATCC BAA-681) (Vibrio psychroerythus).